Reading from the N-terminus, the 1252-residue chain is DNA-directed RNA polymerase subunit beta (1252 aa).

The protein belongs to the RNA polymerase beta chain family. In terms of assembly, the RNAP catalytic core consists of 2 alpha, 1 beta, 1 beta' and 1 omega subunit. When a sigma factor is associated with the core the holoenzyme is formed, which can initiate transcription.

It carries out the reaction RNA(n) + a ribonucleoside 5'-triphosphate = RNA(n+1) + diphosphate. DNA-dependent RNA polymerase catalyzes the transcription of DNA into RNA using the four ribonucleoside triphosphates as substrates. The protein is DNA-directed RNA polymerase subunit beta of Chlamydia trachomatis serovar L2 (strain ATCC VR-902B / DSM 19102 / 434/Bu).